A 402-amino-acid chain; its full sequence is UDP-glucose 6-dehydrogenase (402 aa).

NAD(+)-binding positions include 2–19, V11, D29, K34, T83, T118, and E145; that span reads KIAV…GVLL. Residues 141–145, K204, N208, 249–253, and G257 each bind substrate; these read EFLRE and YNNPS. An NAD(+)-binding site is contributed by Y259. C260 (nucleophile) is an active-site residue. An NAD(+)-binding site is contributed by K263. Residue K320 participates in substrate binding. R327 serves as a coordination point for NAD(+).

The protein belongs to the UDP-glucose/GDP-mannose dehydrogenase family.

The enzyme catalyses UDP-alpha-D-glucose + 2 NAD(+) + H2O = UDP-alpha-D-glucuronate + 2 NADH + 3 H(+). It functions in the pathway nucleotide-sugar biosynthesis; UDP-alpha-D-glucuronate biosynthesis; UDP-alpha-D-glucuronate from UDP-alpha-D-glucose: step 1/1. Catalyzes the formation of UDP-glucuronic acid which is required for capsular hyaluronic acid synthesis. The sequence is that of UDP-glucose 6-dehydrogenase (hasB) from Streptococcus pyogenes serotype M3 (strain ATCC BAA-595 / MGAS315).